The primary structure comprises 101 residues: Urease subunit beta (101 aa).

The protein belongs to the urease beta subunit family. Heterotrimer of UreA (gamma), UreB (beta) and UreC (alpha) subunits. Three heterotrimers associate to form the active enzyme.

Its subcellular location is the cytoplasm. It carries out the reaction urea + 2 H2O + H(+) = hydrogencarbonate + 2 NH4(+). Its pathway is nitrogen metabolism; urea degradation; CO(2) and NH(3) from urea (urease route): step 1/1. The protein is Urease subunit beta of Burkholderia cenocepacia (strain ATCC BAA-245 / DSM 16553 / LMG 16656 / NCTC 13227 / J2315 / CF5610) (Burkholderia cepacia (strain J2315)).